The chain runs to 428 residues: Keratin, type I cytoskeletal 18-A (428 aa).

The interval 2–78 is head; the sequence is SFRSQTSSTT…SVKGSGLFNN (77 aa). The interval 79–114 is coil 1A; that stretch reads EKETMQILNDRLASYLETVRNLEQANSKLELQIRET. The region spanning 79–390 is the IF rod domain; it reads EKETMQILND…RLLDGEDFRL (312 aa). Residues 115 to 131 form a linker 1 region; the sequence is LEKRGPTTQDYSAYEKV. Positions 132–223 are coil 1B; that stretch reads VEDLKSQIYD…RSHQTDVEEL (92 aa). The linker 12 stretch occupies residues 224–247; it reads RKHISECGVQVDVDAPKGQDLSKI. A coil 2 region spans residues 248-385; sequence MEEIRAQYET…IATYRRLLDG (138 aa). The interval 386-428 is tail; it reads EDFRLQDALAVQTTKVQKKITVTETVVDGKVVSQSSEVQEIKK.

This sequence belongs to the intermediate filament family. Heterotetramer of two type I and two type II keratins. Keratin-18 associates with keratin-8. Phosphorylated. Post-translationally, proteolytically cleaved by caspases during epithelial cell apoptosis.

Functionally, when phosphorylated, plays a role in filament reorganization. The polypeptide is Keratin, type I cytoskeletal 18-A (Polypterus senegalus (Senegal bichir)).